Consider the following 515-residue polypeptide: MIILKKQHDTIIVLDFGSQYNQLIARRIREFGVYSELHPHTITAEEIKAMNPKGIIFSGGPNSVYGEGALHCDEKIFELGLPIFGICYGMQLMTQQFGGKVERANHREYGKAVLKVENESKLYANLPEEQVVWMSHGDLVTGLPEGFVVDATSESCPIAGMSNEAKNLYGVQFHPEVRHSEHGNDLIKNFVFGVCGCSEGWNMENFIEVELEKIRETVGDKKVLCALSGGVDSSVVAVLIHKAIGDQLTCIFVDHGLLRKGEAEGVMKTFSEGFHMNVIKVDARDRFMDKLKGVEDPEQKRKIIGNEFIYVFDDEASKLQGMDFLAQGTLYTDIVESGTATAQTIKSHHNVGGLPEDMQFKLIEPLNTLFKDEVRVLGSELGIPDEIVWRQPFPGPGLGIRVLGEITEEKLEIVRESDAILREEIIKAGLDREIWQYFTALPGMRSVGVMGDERTYDYTVGIRAVTSIDGMTADWARIPWDVLEKISVRIVNEVKHVNRIVYDVTSKPPATIEWE.

Residues 10–200 form the Glutamine amidotransferase type-1 domain; sequence TIIVLDFGSQ…VFGVCGCSEG (191 aa). The active-site Nucleophile is Cys-87. Active-site residues include His-174 and Glu-176. The 190-residue stretch at 201–390 folds into the GMPS ATP-PPase domain; the sequence is WNMENFIEVE…LGIPDEIVWR (190 aa). 228 to 234 is a binding site for ATP; that stretch reads SGGVDSS.

As to quaternary structure, homodimer.

It carries out the reaction XMP + L-glutamine + ATP + H2O = GMP + L-glutamate + AMP + diphosphate + 2 H(+). Its pathway is purine metabolism; GMP biosynthesis; GMP from XMP (L-Gln route): step 1/1. Its function is as follows. Catalyzes the synthesis of GMP from XMP. The chain is GMP synthase [glutamine-hydrolyzing] from Bacillus cereus (strain ATCC 14579 / DSM 31 / CCUG 7414 / JCM 2152 / NBRC 15305 / NCIMB 9373 / NCTC 2599 / NRRL B-3711).